The sequence spans 314 residues: Homoserine kinase (314 aa).

An ATP-binding site is contributed by 96–106; that stretch reads PIGSGLGSSAC.

The protein belongs to the GHMP kinase family. Homoserine kinase subfamily.

Its subcellular location is the cytoplasm. It carries out the reaction L-homoserine + ATP = O-phospho-L-homoserine + ADP + H(+). The protein operates within amino-acid biosynthesis; L-threonine biosynthesis; L-threonine from L-aspartate: step 4/5. Functionally, catalyzes the ATP-dependent phosphorylation of L-homoserine to L-homoserine phosphate. The chain is Homoserine kinase from Haemophilus influenzae (strain PittEE).